Reading from the N-terminus, the 425-residue chain is Serine--tRNA ligase (425 aa).

Residue Thr-230–Glu-232 participates in L-serine binding. ATP-binding positions include Arg-261–Glu-263 and Val-277. Residue Glu-284 participates in L-serine binding. Glu-348–Ser-351 contributes to the ATP binding site. Thr-382 contributes to the L-serine binding site.

This sequence belongs to the class-II aminoacyl-tRNA synthetase family. Type-1 seryl-tRNA synthetase subfamily. As to quaternary structure, homodimer. The tRNA molecule binds across the dimer.

The protein resides in the cytoplasm. It carries out the reaction tRNA(Ser) + L-serine + ATP = L-seryl-tRNA(Ser) + AMP + diphosphate + H(+). The enzyme catalyses tRNA(Sec) + L-serine + ATP = L-seryl-tRNA(Sec) + AMP + diphosphate + H(+). It participates in aminoacyl-tRNA biosynthesis; selenocysteinyl-tRNA(Sec) biosynthesis; L-seryl-tRNA(Sec) from L-serine and tRNA(Sec): step 1/1. Catalyzes the attachment of serine to tRNA(Ser). Is also able to aminoacylate tRNA(Sec) with serine, to form the misacylated tRNA L-seryl-tRNA(Sec), which will be further converted into selenocysteinyl-tRNA(Sec). The sequence is that of Serine--tRNA ligase from Streptomyces coelicolor (strain ATCC BAA-471 / A3(2) / M145).